The chain runs to 543 residues: Malate synthase (543 aa).

Catalysis depends on R162, which acts as the Proton acceptor. D449 acts as the Proton donor in catalysis.

The protein belongs to the malate synthase family.

The catalysed reaction is glyoxylate + acetyl-CoA + H2O = (S)-malate + CoA + H(+). Its pathway is carbohydrate metabolism; glyoxylate cycle; (S)-malate from isocitrate: step 2/2. This Dictyostelium discoideum (Social amoeba) protein is Malate synthase (masA).